The chain runs to 657 residues: DNA mismatch repair protein MutL (657 aa).

It belongs to the DNA mismatch repair MutL/HexB family.

This protein is involved in the repair of mismatches in DNA. It is required for dam-dependent methyl-directed DNA mismatch repair. May act as a 'molecular matchmaker', a protein that promotes the formation of a stable complex between two or more DNA-binding proteins in an ATP-dependent manner without itself being part of a final effector complex. This Streptococcus agalactiae serotype Ia (strain ATCC 27591 / A909 / CDC SS700) protein is DNA mismatch repair protein MutL.